A 466-amino-acid polypeptide reads, in one-letter code: Arginine biosynthesis bifunctional protein ArgJ, mitochondrial (466 aa).

A mitochondrion-targeting transit peptide spans 1-9; it reads MSSLVLKRF. Positions 183, 209, 232, 320, 461, and 466 each coordinate substrate. Residue threonine 232 is the Nucleophile of the active site.

This sequence belongs to the ArgJ family. Heterodimer of an alpha and a beta chain. The alpha and beta chains are autoproteolytically processed from a single precursor protein within the mitochondrion.

The protein localises to the mitochondrion matrix. The enzyme catalyses N(2)-acetyl-L-ornithine + L-glutamate = N-acetyl-L-glutamate + L-ornithine. The catalysed reaction is L-glutamate + acetyl-CoA = N-acetyl-L-glutamate + CoA + H(+). It functions in the pathway amino-acid biosynthesis; L-arginine biosynthesis; L-ornithine and N-acetyl-L-glutamate from L-glutamate and N(2)-acetyl-L-ornithine (cyclic): step 1/1. The protein operates within amino-acid biosynthesis; L-arginine biosynthesis; N(2)-acetyl-L-ornithine from L-glutamate: step 1/4. In terms of biological role, catalyzes two activities which are involved in the cyclic version of arginine biosynthesis: the synthesis of acetylglutamate from glutamate and acetyl-CoA, and of ornithine by transacetylation between acetylornithine and glutamate. This Laccaria bicolor (strain S238N-H82 / ATCC MYA-4686) (Bicoloured deceiver) protein is Arginine biosynthesis bifunctional protein ArgJ, mitochondrial.